We begin with the raw amino-acid sequence, 145 residues long: [Ribosomal protein bS18]-alanine N-acetyltransferase (145 aa).

The region spanning 1 to 145 (MIETIVEQDF…ENAVIMALYL (145 aa)) is the N-acetyltransferase domain. Acetyl-CoA is bound at residue 67 to 69 (LAV). The Proton acceptor role is filled by glutamate 101. Residue asparagine 106 participates in acetyl-CoA binding. Tyrosine 113 serves as the catalytic Proton donor.

Belongs to the acetyltransferase family. RimI subfamily.

It is found in the cytoplasm. It catalyses the reaction N-terminal L-alanyl-[ribosomal protein bS18] + acetyl-CoA = N-terminal N(alpha)-acetyl-L-alanyl-[ribosomal protein bS18] + CoA + H(+). Functionally, acetylates the N-terminal alanine of ribosomal protein bS18. This chain is [Ribosomal protein bS18]-alanine N-acetyltransferase, found in Haemophilus ducreyi (strain 35000HP / ATCC 700724).